Consider the following 288-residue polypeptide: ATP synthase gamma chain (288 aa).

It belongs to the ATPase gamma chain family. In terms of assembly, F-type ATPases have 2 components, CF(1) - the catalytic core - and CF(0) - the membrane proton channel. CF(1) has five subunits: alpha(3), beta(3), gamma(1), delta(1), epsilon(1). CF(0) has three main subunits: a, b and c.

Its subcellular location is the cell inner membrane. Its function is as follows. Produces ATP from ADP in the presence of a proton gradient across the membrane. The gamma chain is believed to be important in regulating ATPase activity and the flow of protons through the CF(0) complex. This is ATP synthase gamma chain from Paracidovorax citrulli (strain AAC00-1) (Acidovorax citrulli).